The chain runs to 173 residues: MLALADNILRIINFLFLVISIGLISSLLNTQHRHSSRVNYCMFACAYGIFTDSLYGVFANFIEPLAWPLVLFTLDFLNFVFTFTAGTVLAVGIRAHSCNNSSYVDSNKITQGSGTRCRQAQAAVAFLYFSCAIFLAKTLMSVFNMISNGAFGSGSFSKRRRTGQVGVPTISQV.

Over 1–10 (MLALADNILR) the chain is Cytoplasmic. A helical transmembrane segment spans residues 11–30 (IINFLFLVISIGLISSLLNT). Residues 31 to 37 (QHRHSSR) lie on the Extracellular side of the membrane. Residues 38–62 (VNYCMFACAYGIFTDSLYGVFANFI) form a helical membrane-spanning segment. The Cytoplasmic segment spans residues 63 to 75 (EPLAWPLVLFTLD). Residues 76–93 (FLNFVFTFTAGTVLAVGI) form a helical membrane-spanning segment. The Extracellular segment spans residues 94–137 (RAHSCNNSSYVDSNKITQGSGTRCRQAQAAVAFLYFSCAIFLAK). A helical transmembrane segment spans residues 138-157 (TLMSVFNMISNGAFGSGSFS). Topologically, residues 158-173 (KRRRTGQVGVPTISQV) are cytoplasmic.

This sequence belongs to the NCE102 family.

The protein resides in the cell membrane. In terms of biological role, involved in membrane organization. Required for the formation of membrane compartments of CAN1 (MCCs), localization of CAN1 at the MCCs and subsequent invagination of the plasma membrane at the MCCs sites. Involved in eisosome organization and might act as a sensor of sphingolipids that regulates plasma membrane function. Involved in a novel pathway of export of proteins that lack a cleavable signal sequence. It may be an accessory subunit to an essential core component of the non-classical export machinery. Non-classical export pathway also functions as an alternative clearance/detoxification pathway to eliminate damaged material, when the basic repair pathway is not sufficient. In Saccharomyces cerevisiae (strain ATCC 204508 / S288c) (Baker's yeast), this protein is Non-classical export protein 2 (NCE102).